A 530-amino-acid chain; its full sequence is Histone-arginine methyltransferase CARMER (530 aa).

The 310-residue stretch at 141–450 folds into the SAM-dependent MTase PRMT-type domain; sequence ASQYFQFYGY…QSYDVTIDLH (310 aa). S-adenosyl-L-methionine contacts are provided by Q154, R163, G187, E209, E238, and T266. R501 is subject to Asymmetric dimethylarginine; by autocatalysis.

This sequence belongs to the class I-like SAM-binding methyltransferase superfamily. Protein arginine N-methyltransferase family. As to quaternary structure, homodimer. Post-translationally, the dimethylated protein is the major form.

It is found in the cytoplasm. Its subcellular location is the nucleus. The catalysed reaction is L-arginyl-[protein] + 2 S-adenosyl-L-methionine = N(omega),N(omega)-dimethyl-L-arginyl-[protein] + 2 S-adenosyl-L-homocysteine + 2 H(+). Methylates (mono- and asymmetric dimethylation) the guanidino nitrogens of arginyl residues in proteins. May methylate histone H3 at 'Arg-17' and activate transcription via chromatin remodeling. The sequence is that of Histone-arginine methyltransferase CARMER (Art4) from Drosophila erecta (Fruit fly).